We begin with the raw amino-acid sequence, 344 residues long: Small ribosomal subunit protein mS38 (344 aa).

Disordered stretches follow at residues 1–27, 43–101, and 325–344; these read MIPQ…ASSA, ALQK…SVPS, and KKYK…QDRL. Over residues 51 to 74 the composition is skewed to low complexity; the sequence is SSKPSSPDDGSSRAFAARASVPAA. Over residues 325–338 the composition is skewed to basic residues; that stretch reads KKYKKLMRRTRNER.

It belongs to the mitochondrion-specific ribosomal protein mS38 family. Component of the mitochondrial small ribosomal subunit (mt-SSU). Mature N.crassa 74S mitochondrial ribosomes consist of a small (37S) and a large (54S) subunit. The 37S small subunit contains a 16S ribosomal RNA (16S mt-rRNA) and 32 different proteins. The 54S large subunit contains a 23S rRNA (23S mt-rRNA) and 42 different proteins.

Its subcellular location is the mitochondrion. In terms of biological role, component of the mitochondrial ribosome (mitoribosome), a dedicated translation machinery responsible for the synthesis of mitochondrial genome-encoded proteins, including at least some of the essential transmembrane subunits of the mitochondrial respiratory chain. The mitoribosomes are attached to the mitochondrial inner membrane and translation products are cotranslationally integrated into the membrane. This chain is Small ribosomal subunit protein mS38 (cox24), found in Neurospora crassa (strain ATCC 24698 / 74-OR23-1A / CBS 708.71 / DSM 1257 / FGSC 987).